Reading from the N-terminus, the 195-residue chain is N-terminal acetyltransferase B complex catalytic subunit NAT3 (195 aa).

An N-acetyltransferase domain is found at 2–172 (TTIQPFEPVD…DAFDMRKAMA (171 aa)).

It belongs to the acetyltransferase family. GNAT subfamily. Component of the N-terminal acetyltransferase B (NatB) complex, which is composed of NAT3 and MDM20.

It is found in the cytoplasm. It carries out the reaction N-terminal L-methionyl-L-asparaginyl-[protein] + acetyl-CoA = N-terminal N(alpha)-acetyl-L-methionyl-L-asparaginyl-[protein] + CoA + H(+). The catalysed reaction is N-terminal L-methionyl-L-glutaminyl-[protein] + acetyl-CoA = N-terminal N(alpha)-acetyl-L-methionyl-L-glutaminyl-[protein] + CoA + H(+). The enzyme catalyses N-terminal L-methionyl-L-aspartyl-[protein] + acetyl-CoA = N-terminal N(alpha)-acetyl-L-methionyl-L-aspartyl-[protein] + CoA + H(+). It catalyses the reaction N-terminal L-methionyl-L-glutamyl-[protein] + acetyl-CoA = N-terminal N(alpha)-acetyl-L-methionyl-L-glutamyl-[protein] + CoA + H(+). In terms of biological role, catalytic subunit of the NatB N-terminal acetyltransferase, which catalyzes acetylation of the amino-terminal methionine residues of all proteins beginning with Met-Asp or Met-Glu and of some proteins beginning with Met-Asn, Met-Gln or Met-Met. NatB acetylates TPM1 protein and regulates tropomyocin-actin interactions, it is presumed to N-acetylate 15% of all yeast proteins. This is N-terminal acetyltransferase B complex catalytic subunit NAT3 from Saccharomyces cerevisiae (strain ATCC 204508 / S288c) (Baker's yeast).